The primary structure comprises 68 residues: DNA-directed RNA polymerase subunit Rpo10 (68 aa).

Zn(2+) is bound by residues Cys-7, Cys-10, Cys-44, and Cys-45.

It belongs to the archaeal Rpo10/eukaryotic RPB10 RNA polymerase subunit family. In terms of assembly, part of the RNA polymerase complex. It depends on Zn(2+) as a cofactor.

It localises to the cytoplasm. The enzyme catalyses RNA(n) + a ribonucleoside 5'-triphosphate = RNA(n+1) + diphosphate. Functionally, DNA-dependent RNA polymerase (RNAP) catalyzes the transcription of DNA into RNA using the four ribonucleoside triphosphates as substrates. The polypeptide is DNA-directed RNA polymerase subunit Rpo10 (Methanococcus maripaludis (strain C6 / ATCC BAA-1332)).